Consider the following 316-residue polypeptide: Glutathione synthetase (316 aa).

In terms of domain architecture, ATP-grasp spans 125 to 310; it reads KLFTAWFSDL…ITGMLMDAIE (186 aa). 151 to 207 contributes to the ATP binding site; it reads WEKHSDIILKPLDGMGGASIFRVKEGDPNLGVIAETLTEHGTRYCMAQNYLPAIKDG. The Mg(2+) site is built by E281 and N283.

The protein belongs to the prokaryotic GSH synthase family. In terms of assembly, homotetramer. The cofactor is Mg(2+). It depends on Mn(2+) as a cofactor.

The enzyme catalyses gamma-L-glutamyl-L-cysteine + glycine + ATP = glutathione + ADP + phosphate + H(+). It participates in sulfur metabolism; glutathione biosynthesis; glutathione from L-cysteine and L-glutamate: step 2/2. Inhibited by 7,8-dihydrofolate, methotrexate and trimethoprim. The chain is Glutathione synthetase (gshB) from Escherichia coli (strain K12).